We begin with the raw amino-acid sequence, 390 residues long: Uroporphyrinogen decarboxylase 2, chloroplastic (390 aa).

The N-terminal 30 residues, 1–30 (MATACPPLSLQPAYLSGRSARARRPPPAVR), are a transit peptide targeting the chloroplast. Residues 70–74 (RQAGR), F89, S119, D120, Y197, S252, and H367 contribute to the substrate site.

It belongs to the uroporphyrinogen decarboxylase family. In terms of assembly, homodimer.

Its subcellular location is the plastid. It localises to the chloroplast. The catalysed reaction is uroporphyrinogen III + 4 H(+) = coproporphyrinogen III + 4 CO2. It participates in porphyrin-containing compound metabolism; protoporphyrin-IX biosynthesis; coproporphyrinogen-III from 5-aminolevulinate: step 4/4. Its function is as follows. Catalyzes the decarboxylation of four acetate groups of uroporphyrinogen-III to yield coproporphyrinogen-III. The sequence is that of Uroporphyrinogen decarboxylase 2, chloroplastic from Oryza sativa subsp. japonica (Rice).